A 94-amino-acid chain; its full sequence is Cyclin-dependent kinases regulatory subunit (94 aa).

This sequence belongs to the CKS family. As to quaternary structure, forms a homohexamer that can probably bind six kinase subunits. Interacts with cdk-1.

The protein localises to the nucleus. Its function is as follows. Binds to the catalytic subunit of the cyclin dependent kinases and is essential for their biological function. Has a role in the exit from M phase during early mitotic cell division. More specifically, thought to act by the degrading B-type cyclins that causes breakdown of nuclear envelope and exit mitosis. The polypeptide is Cyclin-dependent kinases regulatory subunit (Caenorhabditis briggsae).